Here is a 508-residue protein sequence, read N- to C-terminus: Potassium/proton antiporter CemA (508 aa).

5 helical membrane passes run 66–86 (LFIIYWSLLEYRISLCFLNLL), 282–302 (YQALASIQYIGCLIFLPWIIS), 386–406 (ILHLLTGMICFTTLGALFILG), 433–453 (ILLLTDLCIGFHSPHGWEVVI), and 468–488 (IISCFVSTFPVILDTVSKYWI).

The protein belongs to the CemA family.

It localises to the plastid. Its subcellular location is the chloroplast inner membrane. It catalyses the reaction K(+)(in) + H(+)(out) = K(+)(out) + H(+)(in). Its function is as follows. Contributes to K(+)/H(+) antiport activity by supporting proton efflux to control proton extrusion and homeostasis in chloroplasts in a light-dependent manner to modulate photosynthesis. Prevents excessive induction of non-photochemical quenching (NPQ) under continuous-light conditions. Indirectly promotes efficient inorganic carbon uptake into chloroplasts. The protein is Potassium/proton antiporter CemA of Anthoceros angustus (Hornwort).